The sequence spans 126 residues: Glycine cleavage system H protein (126 aa).

In terms of domain architecture, Lipoyl-binding spans 21 to 103 (TVTVGISNHA…YEGGWIARIK (83 aa)). N6-lipoyllysine is present on lysine 62.

This sequence belongs to the GcvH family. The glycine cleavage system is composed of four proteins: P, T, L and H. Requires (R)-lipoate as cofactor.

Its function is as follows. The glycine cleavage system catalyzes the degradation of glycine. The H protein shuttles the methylamine group of glycine from the P protein to the T protein. The sequence is that of Glycine cleavage system H protein from Aliivibrio salmonicida (strain LFI1238) (Vibrio salmonicida (strain LFI1238)).